A 393-amino-acid polypeptide reads, in one-letter code: uncharacterized protein (393 aa).

4 residues coordinate [4Fe-4S] cluster: cysteine 72, cysteine 82, cysteine 85, and cysteine 160. Positions 215, 245, 267, and 313 each coordinate S-adenosyl-L-methionine. The active-site Nucleophile is the cysteine 340.

This sequence belongs to the class I-like SAM-binding methyltransferase superfamily. RNA M5U methyltransferase family.

This is an uncharacterized protein from Nitrosomonas europaea (strain ATCC 19718 / CIP 103999 / KCTC 2705 / NBRC 14298).